The primary structure comprises 178 residues: ATP synthase subunit delta (178 aa).

This sequence belongs to the ATPase delta chain family. As to quaternary structure, F-type ATPases have 2 components, F(1) - the catalytic core - and F(0) - the membrane proton channel. F(1) has five subunits: alpha(3), beta(3), gamma(1), delta(1), epsilon(1). F(0) has three main subunits: a(1), b(2) and c(10-14). The alpha and beta chains form an alternating ring which encloses part of the gamma chain. F(1) is attached to F(0) by a central stalk formed by the gamma and epsilon chains, while a peripheral stalk is formed by the delta and b chains.

The protein resides in the cell inner membrane. F(1)F(0) ATP synthase produces ATP from ADP in the presence of a proton or sodium gradient. F-type ATPases consist of two structural domains, F(1) containing the extramembraneous catalytic core and F(0) containing the membrane proton channel, linked together by a central stalk and a peripheral stalk. During catalysis, ATP synthesis in the catalytic domain of F(1) is coupled via a rotary mechanism of the central stalk subunits to proton translocation. In terms of biological role, this protein is part of the stalk that links CF(0) to CF(1). It either transmits conformational changes from CF(0) to CF(1) or is implicated in proton conduction. The protein is ATP synthase subunit delta of Cellvibrio japonicus (strain Ueda107) (Pseudomonas fluorescens subsp. cellulosa).